Reading from the N-terminus, the 84-residue chain is MPNIKSAIKRVKTADTRNSRNASQRSAMRTAIKKFDEAAANNADNAKDLYVEASKKLDSAVSKGLIHKNNAARNKSRLAAKLAK.

Residues 1 to 28 (MPNIKSAIKRVKTADTRNSRNASQRSAM) are disordered.

The protein belongs to the bacterial ribosomal protein bS20 family.

In terms of biological role, binds directly to 16S ribosomal RNA. This chain is Small ribosomal subunit protein bS20, found in Listeria welshimeri serovar 6b (strain ATCC 35897 / DSM 20650 / CCUG 15529 / CIP 8149 / NCTC 11857 / SLCC 5334 / V8).